We begin with the raw amino-acid sequence, 309 residues long: MKKIASVLALFVALLFGLLACSKGSSSGASGKLKVVTTNSILADITKNIAGDKIELHSIVPVGKDPHEYEPLPEDVKKTSQADLIFYNGINLETGGNAWFTKLVKNANKVENKDYFAVSEGVDVIYLEGQNQAGKEDPHAWLNLENGILYAKNIAKQLIAKDPKNKDFYEKNLAAYTEKLSKLDQKAKQAFKNIPEDKKMIVTSEGCFKYFSKAYGVPSAYIWEINTEEEGTPEQIKTLVEKLRQTKVPALFVESSVDERPMKTVAKDTNIPIYAKIFTDSIAKEGEKGDSYYSMMKWNLDKIAEGLSQ.

A signal peptide spans 1 to 20; the sequence is MKKIASVLALFVALLFGLLA. A lipid anchor (N-palmitoyl cysteine) is attached at Cys21. Cys21 carries S-diacylglycerol cysteine lipidation. A divalent metal cation is bound by residues His67, His139, Glu205, and Asp280.

Belongs to the bacterial solute-binding protein 9 family. Lipoprotein receptor antigen (Lrai) subfamily.

It is found in the cell membrane. Part of an ATP-binding cassette (ABC) transport system involved in metal import. Binds a metal with high affinity and specificity and delivers it to the membrane permease for translocation into the cytoplasm. Also acts as an adhesin which is involved on adherence to extracellular matrix. It is an important factor in pathogenesis and infection. May contribute to the formation and accumulation of dental plaque. The protein is Metal ABC transporter substrate-binding lipoprotein FimA (fimA) of Streptococcus parasanguinis.